The primary structure comprises 474 residues: Protein nucleotidyltransferase YdiU (474 aa).

ATP-binding residues include G89, G91, R92, K112, D124, G125, R175, and R182. Catalysis depends on D256, which acts as the Proton acceptor. Mg(2+) is bound by residues N257 and D266. D266 provides a ligand contact to ATP.

This sequence belongs to the SELO family. It depends on Mg(2+) as a cofactor. Mn(2+) serves as cofactor.

The enzyme catalyses L-seryl-[protein] + ATP = 3-O-(5'-adenylyl)-L-seryl-[protein] + diphosphate. It catalyses the reaction L-threonyl-[protein] + ATP = 3-O-(5'-adenylyl)-L-threonyl-[protein] + diphosphate. It carries out the reaction L-tyrosyl-[protein] + ATP = O-(5'-adenylyl)-L-tyrosyl-[protein] + diphosphate. The catalysed reaction is L-histidyl-[protein] + UTP = N(tele)-(5'-uridylyl)-L-histidyl-[protein] + diphosphate. The enzyme catalyses L-seryl-[protein] + UTP = O-(5'-uridylyl)-L-seryl-[protein] + diphosphate. It catalyses the reaction L-tyrosyl-[protein] + UTP = O-(5'-uridylyl)-L-tyrosyl-[protein] + diphosphate. Its function is as follows. Nucleotidyltransferase involved in the post-translational modification of proteins. It can catalyze the addition of adenosine monophosphate (AMP) or uridine monophosphate (UMP) to a protein, resulting in modifications known as AMPylation and UMPylation. This chain is Protein nucleotidyltransferase YdiU, found in Corynebacterium glutamicum (strain R).